Here is a 922-residue protein sequence, read N- to C-terminus: GPI inositol-deacylase (922 aa).

The Cytoplasmic segment spans residues 1 to 11 (MFLHSVNLWNL). A helical transmembrane segment spans residues 12 to 32 (AFYVFMVFLATLGLWDVFFGF). At 33 to 597 (EENKCSMSYM…GQVVRFHGGA (565 aa)) the chain is on the lumenal side. Ser-174 is a catalytic residue. Asn-363, Asn-402, and Asn-558 each carry an N-linked (GlcNAc...) asparagine glycan. The helical transmembrane segment at 598–618 (LPAYVVSSILLAYGGQLYSLL) threads the bilayer. Over 619–641 (STGFCLEYGTMLDKEAKPYKVDP) the chain is Cytoplasmic. A helical membrane pass occupies residues 642-662 (FVIMIKFLLGYKWFKELWDAV). Residues 663–668 (LLPELD) are Lumenal-facing. The helical transmembrane segment at 669 to 689 (AIVLTSQSMCFPLVSLILFLF) threads the bilayer. The Cytoplasmic portion of the chain corresponds to 690–694 (GTCTA). A helical membrane pass occupies residues 695-715 (YWSGLLSSASVQLLSSLWLAL). At 716–733 (KRPAELPKDVKVMSPDLP) the chain is on the lumenal side. The chain crosses the membrane as a helical span at residues 734 to 754 (VLTVVFLIISWTTCGALAILL). The Cytoplasmic portion of the chain corresponds to 755–816 (SYLYYVFKVV…NDAEDSLRMH (62 aa)). The interval 776–801 (NQPVNPKHSRRSEKKSNHHKDSAIQN) is disordered. Over residues 782–793 (KHSRRSEKKSNH) the composition is skewed to basic residues. The chain crosses the membrane as a helical span at residues 817–837 (STVINLLTWVVLLSMPSLIYW). Topologically, residues 838–853 (SKNLRYYFKLNPDPCK) are lumenal. A helical membrane pass occupies residues 854-874 (PLAFLLIPAIAVLGNTHTVSI). Over 875–894 (KSSKLLKTASQFPLPLAVGV) the chain is Cytoplasmic. A helical transmembrane segment spans residues 895 to 915 (IAFGSSHLYRVPCFVIIPLVF). Residues 916–922 (HSLCNFM) are Lumenal-facing.

This sequence belongs to the GPI inositol-deacylase family.

It is found in the endoplasmic reticulum membrane. Its function is as follows. GPI inositol-deacylase that catalyzes the remove of the acyl chain linked to the 2-OH position of inositol ring from the GPI-anchored protein (GPI-AP) in the endoplasmic reticulum. Initiates the post-attachment remodeling phase of GPI-AP biogenesis and participates in endoplasmic reticulum (ER)-to-Golgi transport of GPI-anchored protein. This chain is GPI inositol-deacylase, found in Rattus norvegicus (Rat).